Here is a 434-residue protein sequence, read N- to C-terminus: Nicotinate phosphoribosyltransferase (434 aa).

A Phosphohistidine; by autocatalysis modification is found at His-242.

Belongs to the NAPRTase family. Post-translationally, transiently phosphorylated on a His residue during the reaction cycle. Phosphorylation strongly increases the affinity for substrates and increases the rate of nicotinate D-ribonucleotide production. Dephosphorylation regenerates the low-affinity form of the enzyme, leading to product release.

The enzyme catalyses nicotinate + 5-phospho-alpha-D-ribose 1-diphosphate + ATP + H2O = nicotinate beta-D-ribonucleotide + ADP + phosphate + diphosphate. Its pathway is cofactor biosynthesis; NAD(+) biosynthesis; nicotinate D-ribonucleotide from nicotinate: step 1/1. Functionally, catalyzes the synthesis of beta-nicotinate D-ribonucleotide from nicotinate and 5-phospho-D-ribose 1-phosphate at the expense of ATP. The sequence is that of Nicotinate phosphoribosyltransferase from Mesorhizobium japonicum (strain LMG 29417 / CECT 9101 / MAFF 303099) (Mesorhizobium loti (strain MAFF 303099)).